The following is a 616-amino-acid chain: tRNA uridine 5-carboxymethylaminomethyl modification enzyme MnmG (616 aa).

FAD is bound by residues 10–15 (GAGHAG), V122, and S177. 271–285 (GPRYCPSIEDKVVRF) is an NAD(+) binding site. Residue Q368 coordinates FAD.

The protein belongs to the MnmG family. Homodimer. Heterotetramer of two MnmE and two MnmG subunits. FAD is required as a cofactor.

The protein resides in the cytoplasm. In terms of biological role, NAD-binding protein involved in the addition of a carboxymethylaminomethyl (cmnm) group at the wobble position (U34) of certain tRNAs, forming tRNA-cmnm(5)s(2)U34. This Malacoplasma penetrans (strain HF-2) (Mycoplasma penetrans) protein is tRNA uridine 5-carboxymethylaminomethyl modification enzyme MnmG.